The chain runs to 1013 residues: Poly [ADP-ribose] polymerase 1 (1013 aa).

2 consecutive PARP-type zinc fingers follow at residues 10–92 (YKAE…ESGG) and 113–203 (FAVE…PAVK). Zn(2+) contacts are provided by Cys-22, Cys-25, His-54, Cys-57, Cys-125, Cys-128, His-159, and Cys-162. The segment at 202–228 (VKSEGKRKADEVDGGVSKKQKKEDEKL) is disordered. The short motif at 207–209 (KRK) is the Nuclear localization signal element. The region spanning 219–353 (KKQKKEDEKL…FKRQDRVFPK (135 aa)) is the PADR1 zinc-binding domain. Residues 284–326 (GSLKPCETCKGQLVFKSDAYYCTGDISAWTKCVFKTQTPDRKD) form a zinc ribbon region. Zn(2+)-binding residues include Cys-289, Cys-292, Cys-305, and Cys-315. The interval 353–385 (KDAPPAAATPSSGSTTSAATSVSSASKNLTEAP) is disordered. Positions 356-378 (PPAAATPSSGSTTSAATSVSSAS) are enriched in low complexity. The interval 365–523 (GSTTSAATSV…EGGSKSKKMK (159 aa)) is automodification domain. Positions 385–461 (PADKPLTGMK…RVVADDFLTD (77 aa)) constitute a BRCT domain. PolyADP-ribosyl glutamic acid occurs at positions 413, 435, 444, 445, 464, 471, 484, and 488. The segment covering 494–507 (AATKSTGAHSSKST) has biased composition (low complexity). The tract at residues 494-522 (AATKSTGAHSSKSTGKVKEEEGGSKSKKM) is disordered. Residues Glu-512 and Glu-513 each carry the polyADP-ribosyl glutamic acid modification. Positions 541–637 (CAHVLEQNGK…SNFTKYPNKF (97 aa)) constitute a WGR domain. Residues 661 to 778 (KSQLEKPVQD…DIEVAYSLLR (118 aa)) form the PARP alpha-helical domain. The PARP catalytic domain occupies 787-1013 (DPIDINYEKL…IRFNYQTSLW (227 aa)). Residues 861-863 (HGS), Gly-870, Arg-877, and Ser-903 each bind NAD(+). Catalysis depends on Glu-987, which acts as the For poly [ADP-ribose] polymerase activity.

Belongs to the ARTD/PARP family. In terms of assembly, homodimer; PARP-type zinc-fingers from separate parp1 molecules form a dimer module that specifically recognizes DNA strand breaks. In terms of processing, poly-ADP-ribosylated on serine, glutamate and aspartate residues by autocatalysis. Auto-ADP-ribosylation on serine takes place following interaction with HPF1. Auto poly-ADP-ribosylation on serine residues promotes its dissociation from chromatin.

It is found in the chromosome. It localises to the nucleus. The protein resides in the nucleolus. The protein localises to the cytoplasm. Its subcellular location is the cytosol. The enzyme catalyses NAD(+) + (ADP-D-ribosyl)n-acceptor = nicotinamide + (ADP-D-ribosyl)n+1-acceptor + H(+).. The catalysed reaction is L-seryl-[protein] + NAD(+) = O-(ADP-D-ribosyl)-L-seryl-[protein] + nicotinamide + H(+). It carries out the reaction L-aspartyl-[protein] + NAD(+) = 4-O-(ADP-D-ribosyl)-L-aspartyl-[protein] + nicotinamide. It catalyses the reaction L-glutamyl-[protein] + NAD(+) = 5-O-(ADP-D-ribosyl)-L-glutamyl-[protein] + nicotinamide. The enzyme catalyses L-tyrosyl-[protein] + NAD(+) = O-(ADP-D-ribosyl)-L-tyrosyl-[protein] + nicotinamide + H(+). The catalysed reaction is L-histidyl-[protein] + NAD(+) = N(tele)-(ADP-D-ribosyl)-L-histidyl-[protein] + nicotinamide + H(+). Its activity is regulated as follows. ADP-ribosyltransferase activity is regulated via an allosteric activation mechanism. In absence of activation signal, parp1 is autoinhibited by the PARP alpha-helical domain (also named HD region), which prevents effective NAD(+)-binding. Activity is highly stimulated by signals, such as DNA strand breaks. Binding to damaged DNA unfolds the PARP alpha-helical domain, relieving autoinhibition. Poly-ADP-ribosyltransferase activity is tightly regulated and parp1 is removed from damaged chromatin following initial poly-ADP-ribosylation of chromatin to avoid prolonged residence (trapping) that has cytotoxic consequences. A number of factors or post-translational modifications (auto-poly-ADP-ribosylation) promote parp1 removal from chromatin. Its function is as follows. Poly-ADP-ribosyltransferase that mediates poly-ADP-ribosylation of proteins and plays a key role in DNA repair. Mediates glutamate, aspartate, serine, histidine or tyrosine ADP-ribosylation of proteins: the ADP-D-ribosyl group of NAD(+) is transferred to the acceptor carboxyl group of target residues and further ADP-ribosyl groups are transferred to the 2'-position of the terminal adenosine moiety, building up a polymer with an average chain length of 20-30 units. Serine ADP-ribosylation of proteins constitutes the primary form of ADP-ribosylation of proteins in response to DNA damage. Specificity for the different amino acids is conferred by interacting factors, such as hpf1 and nmnat1. Following interaction with hpf1, catalyzes serine ADP-ribosylation of target proteins; hpf1 confers serine specificity by completing the parp1 active site. Also catalyzes tyrosine ADP-ribosylation of target proteins following interaction with hpf1. Following interaction with nmnat1, catalyzes glutamate and aspartate ADP-ribosylation of target proteins; nmnat1 confers glutamate and aspartate specificity. Parp1 initiates the repair of DNA breaks: recognizes and binds DNA breaks within chromatin and recruits hpf1, licensing serine ADP-ribosylation of target proteins, such as histones (H2BS6ADPr and H3S10ADPr), thereby promoting decompaction of chromatin and the recruitment of repair factors leading to the reparation of DNA strand breaks. In addition to base excision repair (BER) pathway, also involved in double-strand breaks (DSBs) repair. Mediates the poly-ADP-ribosylation of a number of proteins. In addition to proteins, also able to ADP-ribosylate DNA: catalyzes ADP-ribosylation of DNA strand break termini containing terminal phosphates and a 2'-OH group in single- and double-stranded DNA, respectively. Parp1-mediated DNA repair in neurons plays a role in sleep: senses DNA damage in neurons and promotes sleep, facilitating efficient DNA repair. In addition to DNA repair, also involved in other processes, such as transcription regulation, programmed cell death, membrane repair, adipogenesis and innate immunity. Acts as a repressor of transcription: binds to nucleosomes and modulates chromatin structure in a manner similar to histone H1, thereby altering RNA polymerase II. Acts both as a positive and negative regulator of transcription elongation, depending on the context. Poly-ADP-ribose chains generated by parp1 also play a role in poly-ADP-ribose-dependent cell death, a process named parthanatos. Also acts as a negative regulator of the cGAS-STING pathway by mediating poly-ADP-ribosylation and inactivation of cgas. Acts as a negative regulator of adipogenesis by catalyzing poly ADP-ribosylation of histone H2B on 'Glu-35' (H2BE35ADPr). The protein is Poly [ADP-ribose] polymerase 1 of Danio rerio (Zebrafish).